A 450-amino-acid chain; its full sequence is Glucose-6-phosphate isomerase (450 aa).

The Proton donor role is filled by Glu-291. Residues His-312 and Lys-426 contribute to the active site.

This sequence belongs to the GPI family.

It localises to the cytoplasm. The catalysed reaction is alpha-D-glucose 6-phosphate = beta-D-fructose 6-phosphate. It functions in the pathway carbohydrate biosynthesis; gluconeogenesis. Its pathway is carbohydrate degradation; glycolysis; D-glyceraldehyde 3-phosphate and glycerone phosphate from D-glucose: step 2/4. Functionally, catalyzes the reversible isomerization of glucose-6-phosphate to fructose-6-phosphate. The sequence is that of Glucose-6-phosphate isomerase from Clostridium botulinum (strain Langeland / NCTC 10281 / Type F).